Reading from the N-terminus, the 3108-residue chain is Probable polyketide synthase 39 (3108 aa).

The Ketosynthase family 3 (KS3) domain occupies 9 to 440 (DDDVAVIGIG…GSNVCLILSE (432 aa)). Active-site for beta-ketoacyl synthase activity residues include Cys181, His320, and His363. The segment at 643-676 (GVSADIIIGHSLGEISSAYCSGMIDFQTLCYLTY) is acyl/malonyl transferase. The For acyl/malonyl transferase activity role is filled by Ser653. Residues 939–1068 (HEKIKSEGPS…GNFSLFKHNI (130 aa)) form an N-terminal hotdog fold region. A PKS/mFAS DH domain is found at 939 to 1265 (HEKIKSEGPS…CTIAASNPDS (327 aa)). The active-site Proton acceptor; for dehydratase activity is His980. A C-terminal hotdog fold region spans residues 1085 to 1265 (NFTSISKQDL…CTIAASNPDS (181 aa)). Residue Asp1157 is the Proton donor; for dehydratase activity of the active site. The disordered stretch occupies residues 1375–1435 (NNNNNNNNNN…NNNNNNNNNN (61 aa)). One can recognise a Carrier domain in the interval 2566–2643 (GNNEIIHSTI…QSIEIIKSAL (78 aa)). An O-(pantetheine 4'-phosphoryl)serine modification is found at Ser2603. A helical transmembrane segment spans residues 2702–2722 (IFLTGSTGFLGAYLLMELIKM).

The cofactor is pantetheine 4'-phosphate.

It is found in the membrane. In terms of biological role, probable polyketide synthase. This chain is Probable polyketide synthase 39 (pks39), found in Dictyostelium discoideum (Social amoeba).